Here is a 47-residue protein sequence, read N- to C-terminus: Photosystem II reaction center protein Psb30 (47 aa).

Residues 19–39 (VIFQLLSVALIVIAGPVVIFL) form a helical membrane-spanning segment.

This sequence belongs to the Psb30/Ycf12 family. As to quaternary structure, PSII is composed of 1 copy each of membrane proteins PsbA, PsbB, PsbC, PsbD, PsbE, PsbF, PsbH, PsbI, PsbJ, PsbK, PsbL, PsbM, PsbT, PsbX, PsbY, PsbZ, Psb30/Ycf12, peripheral proteins PsbO, CyanoQ (PsbQ), PsbU, PsbV and a large number of cofactors. It forms dimeric complexes.

The protein localises to the cellular thylakoid membrane. Its function is as follows. A core subunit of photosystem II (PSII), probably helps stabilize the reaction center. The protein is Photosystem II reaction center protein Psb30 of Nostoc punctiforme (strain ATCC 29133 / PCC 73102).